The sequence spans 508 residues: Cobalamin biosynthesis protein CobIJ (508 aa).

The segment at 1–243 (MSARGTLWGV…AMLPGGRRRA (243 aa)) is precorrin-2 C20-methyltransferase. The segment at 244–508 (LLTGTVAVVG…TATKSSRHSD (265 aa)) is precorrin-3 methylase. Residues 489 to 508 (PRRYPEAGRATATKSSRHSD) form a disordered region.

It belongs to the precorrin methyltransferase family.

It catalyses the reaction precorrin-2 + S-adenosyl-L-methionine = precorrin-3A + S-adenosyl-L-homocysteine + H(+). It carries out the reaction precorrin-3B + S-adenosyl-L-methionine = precorrin-4 + S-adenosyl-L-homocysteine + 3 H(+). Its pathway is cofactor biosynthesis; adenosylcobalamin biosynthesis; cob(II)yrinate a,c-diamide from precorrin-2 (aerobic route): step 1/10. It participates in cofactor biosynthesis; adenosylcobalamin biosynthesis; cob(II)yrinate a,c-diamide from precorrin-2 (aerobic route): step 3/10. Its function is as follows. Methylates precorrin-2 at the C-20 position to produce precorrin-3A. This Mycobacterium bovis (strain ATCC BAA-935 / AF2122/97) protein is Cobalamin biosynthesis protein CobIJ (cobIJ).